Reading from the N-terminus, the 481-residue chain is OTU domain-containing protein 1 (481 aa).

2 disordered regions span residues 18–60 and 202–282; these read PTAA…AAAE and LAAA…IVSR. Residues 38 to 58 are compositionally biased toward low complexity; it reads PPGAAGAAPEPETGECQPAAA. A compositionally biased stretch (basic and acidic residues) spans 225-257; it reads GEEHLAERGPRGWERGGDRCDAPGGDAARRPDP. Over residues 261-281 the composition is skewed to low complexity; that stretch reads APPAGSIEAAPSSAAEPVIVS. Positions 309 to 438 constitute an OTU domain; that stretch reads KYRFHIIPDG…NGHYDAVFDH (130 aa). A cys-loop region spans residues 314–320; sequence IIPDGNC. The active site involves aspartate 317. The Nucleophile role is filled by cysteine 320. The his-loop stretch occupies residues 369 to 379; sequence AAQDGAWAGYP. The variable-loop stretch occupies residues 426-431; the sequence is WLSNGH. Histidine 431 is a catalytic residue. Positions 457–476 constitute a UIM domain; that stretch reads KRDEELAKSMAISLSKMYIE.

It carries out the reaction Thiol-dependent hydrolysis of ester, thioester, amide, peptide and isopeptide bonds formed by the C-terminal Gly of ubiquitin (a 76-residue protein attached to proteins as an intracellular targeting signal).. Its function is as follows. Deubiquitinating enzyme that specifically hydrolyzes 'Lys-63'-linked polyubiquitin to monoubiquitin. Required for the stability and translation of a subset mRNAs with a high abundance of rare codons by mediating deubiquitination of 40S ribosomal protein RPS10/eS10, thereby antagonizing ZNF598-mediated 40S ubiquitination. The abundance of rare codons in mRNAs can limit the translation rate and can lead to ribosome collisions that trigger activation of ribosome quality control (RQC) pathway by ZNF598. OTUD1-mediated deubiquitination prevents activation of the RQC and subsequent dissociation of ribosomes and stimulates formation of polysomes and translation. The chain is OTU domain-containing protein 1 from Homo sapiens (Human).